The chain runs to 840 residues: N-acetyltransferase ESCO1 (840 aa).

Residues 1-25 (MMSIQEKSKENSSKVTKKSDDKNSE) show a composition bias toward basic and acidic residues. A disordered region spans residues 1–188 (MMSIQEKSKE…VLEVKSDSKE (188 aa)). 3 stretches are compositionally biased toward polar residues: residues 46 to 58 (KSQA…SKIN), 65 to 74 (RMSTRSSKAA), and 81 to 96 (KSIN…YSQE). The span at 131-140 (VSRRSLRSRE) shows a compositional bias: basic and acidic residues. Positions 141-153 (IQGQVQAVKQSLP) are enriched in polar residues. Low complexity predominate over residues 161–170 (SSTQSKSNKT). The span at 178-188 (KVLEVKSDSKE) shows a compositional bias: basic and acidic residues. Position 200 is a phosphoserine (Ser200). Disordered stretches follow at residues 221-300 (TQGS…KSKR) and 318-338 (NVEV…KPTE). Residues 267-278 (HTQVNTNTTLPK) show a composition bias toward polar residues. Residues 319 to 338 (VEVKKESSQMESVKEEKPTE) show a composition bias toward basic and acidic residues. Lys332 is covalently cross-linked (Glycyl lysine isopeptide (Lys-Gly) (interchain with G-Cter in SUMO2)). Ser412 is subject to Phosphoserine. Disordered stretches follow at residues 486–505 (ANEI…HSFD) and 542–582 (TGEN…KCNS). The span at 551 to 565 (APQQHSILSNQTSKS) shows a compositional bias: polar residues. The CCHH-type zinc-finger motif lies at 617 to 641 (VSCNVCGMLYTASNPEDETQHLLFH). Acetyl-CoA is bound by residues 772–774 (IWV), 780–785 (RKKIAS), and 812–814 (TPD).

The protein belongs to the acetyltransferase family. ECO subfamily. As to quaternary structure, the subunit structure is controversial. Monomer. Homodimer. Post-translationally, phosphorylated during mitosis, when associated with chromosomes. As to expression, widely expressed. Expressed in heart, brain, liver, placenta, lung, kidney and pancreas. Highly expressed in muscle.

The protein resides in the nucleus. It is found in the chromosome. It carries out the reaction L-lysyl-[protein] + acetyl-CoA = N(6)-acetyl-L-lysyl-[protein] + CoA + H(+). Acetyltransferase required for the establishment of sister chromatid cohesion. Couples the processes of cohesion and DNA replication to ensure that only sister chromatids become paired together. In contrast to the structural cohesins, the deposition and establishment factors are required only during S phase. Acts by mediating the acetylation of cohesin component SMC3. In Homo sapiens (Human), this protein is N-acetyltransferase ESCO1 (ESCO1).